The sequence spans 333 residues: GTPase Obg (333 aa).

One can recognise an Obg domain in the interval 1–159; the sequence is MKFIDQTIIQ…RDIQLELILI (159 aa). An OBG-type G domain is found at 160 to 332; sequence ADVGTLGMPN…LCSDIAFYLQ (173 aa). Residues 166–173, 191–195, 212–215, 282–285, and 313–315 each bind GTP; these read GMPNAGKS, FTTLN, DIPG, NKID, and SSI. Serine 173 and threonine 193 together coordinate Mg(2+).

Belongs to the TRAFAC class OBG-HflX-like GTPase superfamily. OBG GTPase family. As to quaternary structure, monomer. Mg(2+) is required as a cofactor.

The protein localises to the cytoplasm. In terms of biological role, an essential GTPase which binds GTP, GDP and possibly (p)ppGpp with moderate affinity, with high nucleotide exchange rates and a fairly low GTP hydrolysis rate. Plays a role in control of the cell cycle, stress response, ribosome biogenesis and in those bacteria that undergo differentiation, in morphogenesis control. This is GTPase Obg from Buchnera aphidicola subsp. Schizaphis graminum (strain Sg).